The chain runs to 179 residues: Sec-independent protein translocase protein TatB (179 aa).

The helical transmembrane segment at 2-22 (FNGVGWGEVVVLLLIGLFVFG) threads the bilayer. Residues 98 to 109 (LLGDDPPAAPSL) show a composition bias toward low complexity. Residues 98–179 (LLGDDPPAAP…TEVPFDSDAT (82 aa)) form a disordered region.

Belongs to the TatB family. The Tat system comprises two distinct complexes: a TatABC complex, containing multiple copies of TatA, TatB and TatC subunits, and a separate TatA complex, containing only TatA subunits. Substrates initially bind to the TatABC complex, which probably triggers association of the separate TatA complex to form the active translocon.

It is found in the cell membrane. Its function is as follows. Part of the twin-arginine translocation (Tat) system that transports large folded proteins containing a characteristic twin-arginine motif in their signal peptide across membranes. Together with TatC, TatB is part of a receptor directly interacting with Tat signal peptides. TatB may form an oligomeric binding site that transiently accommodates folded Tat precursor proteins before their translocation. The polypeptide is Sec-independent protein translocase protein TatB (Frankia casuarinae (strain DSM 45818 / CECT 9043 / HFP020203 / CcI3)).